A 614-amino-acid chain; its full sequence is Interleukin-18 receptor accessory protein (614 aa).

The first 19 residues, 1–19, serve as a signal peptide directing secretion; the sequence is MLCLGWVFLWFVAGEKTTG. The Extracellular segment spans residues 20 to 356; sequence FNHSACATKK…RTIRLRKKEE (337 aa). A glycan (N-linked (GlcNAc...) asparagine) is linked at N21. An intrachain disulfide couples C46 to C126. The tract at residues 59 to 78 is disordered; that stretch reads ASQLSPTQSPAHKPCSGSQK. Ig-like C2-type domains lie at 148-234 and 250-352; these read PQRN…WTVR and PEIL…IRLR. An N-linked (GlcNAc...) asparagine glycan is attached at N151. 3 cysteine pairs are disulfide-bonded: C154–C179, C174–C220, and C179–C220. The N-linked (GlcNAc...) asparagine glycan is linked to N227. The cysteines at positions 272 and 336 are disulfide-linked. An N-linked (GlcNAc...) asparagine glycan is attached at N344. A helical membrane pass occupies residues 357-377; it reads VVFVYILLGTALMLVGVLVAA. At 378–614 the chain is on the cytoplasmic side; the sequence is AFLYWYWIEV…LLLYSDQKRC (237 aa). A TIR domain is found at 405-558; that stretch reads KEFDAFVSYS…RFWTQIRYHM (154 aa). The active site involves E492.

It belongs to the interleukin-1 receptor family. As to quaternary structure, forms a ternary complex with IL18 and IL18R1. Within this complex, IL18R1 is involved in ligand-binding and IL18RAP in signaling leading to NF-kappa-B and JNK activation.

The protein resides in the cell membrane. It catalyses the reaction NAD(+) + H2O = ADP-D-ribose + nicotinamide + H(+). In terms of biological role, within the IL18 receptor complex, does not mediate IL18-binding, but involved in IL18-dependent signal transduction, leading to NF-kappa-B and JNK activation. May play a role in IL18-mediated IFNG synthesis from T-helper 1 (Th1) cells. The protein is Interleukin-18 receptor accessory protein of Mus musculus (Mouse).